The sequence spans 259 residues: Gem-associated protein 2 (259 aa).

It belongs to the gemin-2 family. In terms of assembly, forms a stable heteromeric complex with survival of motor neuron protein (SMN), GEMIN3 and GEMIN4. The SMN complex is associated with the spliceosomal snRNAs U1 and U5 in the cytoplasm of oocytes.

The protein localises to the nucleus. It is found in the gem. Its subcellular location is the cytoplasm. In terms of biological role, the SMN complex catalyzes the assembly of small nuclear ribonucleoproteins (snRNPs), the building blocks of the spliceosome, and thereby plays an important role in the splicing of cellular pre-mRNAs. Most spliceosomal snRNPs contain a common set of Sm proteins SNRPB, SNRPD1, SNRPD2, SNRPD3, SNRPE, SNRPF and SNRPG that assemble in a heptameric protein ring on the Sm site of the small nuclear RNA to form the core snRNP (Sm core). In the cytosol, the Sm proteins SNRPD1, SNRPD2, SNRPE, SNRPF and SNRPG (5Sm) are trapped in an inactive 6S pICln-Sm complex by the chaperone CLNS1A that controls the assembly of the core snRNP. To assemble core snRNPs, the SMN complex accepts the trapped 5Sm proteins from CLNS1A. Binding of snRNA inside 5Sm ultimately triggers eviction of the SMN complex, thereby allowing binding of SNRPD3 and SNRPB to complete assembly of the core snRNP. Within the SMN complex, GEMIN2 constrains the conformation of 5Sm, thereby promoting 5Sm binding to snRNA containing the snRNP code (a nonameric Sm site and a 3'-adjacent stem-loop), thus preventing progression of assembly until a cognate substrate is bound. This Xenopus laevis (African clawed frog) protein is Gem-associated protein 2 (gemin2).